Consider the following 1279-residue polypeptide: Talin-A (1279 aa).

Positions 84 to 365 constitute an FERM domain; sequence RPQKFKLLDG…GYIEIIMKAR (282 aa).

The protein localises to the cytoplasm. The protein resides in the cytoskeleton. Its subcellular location is the cell cortex. Functionally, actin-binding protein that may be involved in the control of cell motility and chemotaxis. The polypeptide is Talin-A (talA) (Dictyostelium discoideum (Social amoeba)).